Here is a 200-residue protein sequence, read N- to C-terminus: ATP synthase subunit b (200 aa).

A helical transmembrane segment spans residues 12-32 (ILSGLAVAVAILVPVLALASG).

Belongs to the ATPase B chain family. In terms of assembly, F-type ATPases have 2 components, F(1) - the catalytic core - and F(0) - the membrane proton channel. F(1) has five subunits: alpha(3), beta(3), gamma(1), delta(1), epsilon(1). F(0) has three main subunits: a(1), b(2) and c(10-14). The alpha and beta chains form an alternating ring which encloses part of the gamma chain. F(1) is attached to F(0) by a central stalk formed by the gamma and epsilon chains, while a peripheral stalk is formed by the delta and b chains.

Its subcellular location is the cell inner membrane. In terms of biological role, f(1)F(0) ATP synthase produces ATP from ADP in the presence of a proton or sodium gradient. F-type ATPases consist of two structural domains, F(1) containing the extramembraneous catalytic core and F(0) containing the membrane proton channel, linked together by a central stalk and a peripheral stalk. During catalysis, ATP synthesis in the catalytic domain of F(1) is coupled via a rotary mechanism of the central stalk subunits to proton translocation. Component of the F(0) channel, it forms part of the peripheral stalk, linking F(1) to F(0). The sequence is that of ATP synthase subunit b from Trichlorobacter lovleyi (strain ATCC BAA-1151 / DSM 17278 / SZ) (Geobacter lovleyi).